A 52-amino-acid polypeptide reads, in one-letter code: Phospholamban (52 aa).

M1 carries the N-acetylmethionine modification. At 1-31 (MEKVQYLTRSAIRRASTIEMPQQARQKLQNL) the chain is on the cytoplasmic side. Residue S16 is modified to Phosphoserine; by PKA and DMPK. The interval 16–22 (STIEMPQ) is involved in HAX1 binding. Phosphothreonine; by CaMK2 is present on T17. A helical transmembrane segment spans residues 32 to 52 (FINFCLILICLLLICIIVMLL). C36 carries the S-palmitoyl cysteine lipid modification.

It belongs to the phospholamban family. As to quaternary structure, homopentamer. Can also form heterooligomers with other sarcoplasmic/endoplasmic reticulum calcium ATPase (SERCA) regulators ARLN, ERLN, SLN and STRIT1/DWORF. Monomer. Interacts with HAX1. Interacts as a monomer with ATP2A2; the interaction decreases ATP2A2 Ca(2+) affinity. Interacts with VMP1; VMP1 competes with PLN and SLN to prevent them from forming an inhibitory complex with ATP2A2. Interacts with S100A1 in a Ca(2+)-dependent manner. Phosphorylation by PKA abolishes the inhibition of ATP2A2-mediated calcium uptake. Phosphorylated at Thr-17 by CaMK2, and in response to beta-adrenergic stimulation. Phosphorylation by DMPK may stimulate sarcoplasmic reticulum calcium uptake in cardiomyocytes. Post-translationally, palmitoylated by ZDHHC16, promoting formation of the homopentamer. In terms of processing, in elongated spermatids, proteolytically cleaved by SPPL2C which modulates intracellular Ca(2+) homeostasis. In terms of tissue distribution, heart muscle (at protein level).

It localises to the endoplasmic reticulum membrane. The protein localises to the sarcoplasmic reticulum membrane. It is found in the mitochondrion membrane. Its subcellular location is the membrane. Functionally, reversibly inhibits the activity of ATP2A2/SERCA2 in cardiac sarcoplasmic reticulum by decreasing the apparent affinity of the ATPase for Ca(2+). Binds preferentially to the ATP-bound E1 conformational form of ATP2A2 which predominates at low Ca(2+) concentrations during the diastolic phase of the cardiac cycle. Inhibits ATP2A2 Ca(2+) affinity by disrupting its allosteric activation by ATP. Modulates the contractility of the heart muscle in response to physiological stimuli via its effects on ATP2A2. Modulates calcium re-uptake during muscle relaxation and plays an important role in calcium homeostasis in the heart muscle. The degree of ATP2A2 inhibition depends on the oligomeric state of PLN. ATP2A2 inhibition is alleviated by PLN phosphorylation. Also inhibits the activity of ATP2A3/SERCA3. Controls intracellular Ca(2+) levels in elongated spermatids and may play a role in germ cell differentiation. In the thalamic reticular nucleus of the brain, plays a role in the regulation of sleep patterns and executive functioning. The polypeptide is Phospholamban (Homo sapiens (Human)).